The chain runs to 263 residues: 3-deoxy-manno-octulosonate cytidylyltransferase 1 (263 aa).

This sequence belongs to the KdsB family.

It localises to the cytoplasm. The enzyme catalyses 3-deoxy-alpha-D-manno-oct-2-ulosonate + CTP = CMP-3-deoxy-beta-D-manno-octulosonate + diphosphate. The protein operates within nucleotide-sugar biosynthesis; CMP-3-deoxy-D-manno-octulosonate biosynthesis; CMP-3-deoxy-D-manno-octulosonate from 3-deoxy-D-manno-octulosonate and CTP: step 1/1. It participates in bacterial outer membrane biogenesis; lipopolysaccharide biosynthesis. Activates KDO (a required 8-carbon sugar) for incorporation into bacterial lipopolysaccharide in Gram-negative bacteria. This Burkholderia ambifaria (strain MC40-6) protein is 3-deoxy-manno-octulosonate cytidylyltransferase 1.